The primary structure comprises 111 residues: uncharacterized protein (111 aa).

The HIT domain maps to 8–111 (LFLKIIKREE…HVHIIPYYKK (104 aa)). A Histidine triad motif motif is present at residues 100 to 104 (HTHVH).

This is an uncharacterized protein from Mesomycoplasma hyorhinis (Mycoplasma hyorhinis).